The sequence spans 330 residues: Olfactory receptor 5T9 (330 aa).

Residues 1–37 (MSIHSPGYTVRRIPVNNVTDTTMFILTGFTDDADLQV) lie on the Extracellular side of the membrane. Asn-17 carries N-linked (GlcNAc...) asparagine glycosylation. The chain crosses the membrane as a helical span at residues 38–58 (LLFLLFFVIYLFTLIGNLGLV). Topologically, residues 59-66 (LLVIGDSR) are cytoplasmic. The helical transmembrane segment at 67–87 (LHNPMYYFLSVLSFLDACYST) threads the bilayer. Residues 88-111 (VVTPKMLVNFISNDKSISYPGCVT) lie on the Extracellular side of the membrane. An intrachain disulfide couples Cys-109 to Cys-201. A helical membrane pass occupies residues 112–132 (EMFLFVTFGTTECFLLAAMAY). The Cytoplasmic segment spans residues 133 to 145 (DRFVAIYNPLLYA). Residues 146–166 (VKMSPRVYIPLIIACYSGGIM) traverse the membrane as a helical segment. Residues 167-208 (HATIHTVATFSLSFCASNEIRHVFCDIPPLLAISCSNTNINQ) are Extracellular-facing. A helical membrane pass occupies residues 209 to 229 (LLLFYCVGSIEIITILIVLVS). Residues 230–249 (YSFILFAILKMNSAEGRRKI) are Cytoplasmic-facing. The helical transmembrane segment at 250–270 (FSTCGSHLTGVSIYHGTILFM) threads the bilayer. The Extracellular segment spans residues 271 to 283 (YVRPSSNYALEHD). Residues 284-304 (MIVSTFYTIVIPMLNPIIYSL) traverse the membrane as a helical segment. At 305 to 330 (RNKDVKEAMKKIFERNFFMNKVHFKL) the chain is on the cytoplasmic side.

The protein belongs to the G-protein coupled receptor 1 family.

Its subcellular location is the cell membrane. Potential odorant receptor. The protein is Olfactory receptor 5T9 of Mus musculus (Mouse).